The following is a 1113-amino-acid chain: StAR-related lipid transfer protein 13 (1113 aa).

Methionine 1 is subject to N-acetylmethionine. One can recognise an SAM domain in the interval 55-122 (QQEIEAKEAC…LNKCASMKLD (68 aa)). Disordered stretches follow at residues 162 to 254 (LLPR…PTRA) and 307 to 346 (PNGD…VSTP). Residues 177 to 188 (MRNTTSSESVLT) show a composition bias toward polar residues. Low complexity-rich tracts occupy residues 197–213 (SIHS…SQPG) and 326–344 (SGKS…SGVS). Serine 411 bears the Phosphoserine mark. Polar residues predominate over residues 536–549 (FEGNSVSEGRTTPS). A disordered region spans residues 536-580 (FEGNSVSEGRTTPSDVERDVTSLNESEPPGVRDRRDSGVGASLTR). Residues 663-868 (VPLIVHVQRT…HMIMECDRLF (206 aa)) form the Rho-GAP domain. Residues 899 to 1107 (LEESGATFHT…RNSFQPLIAE (209 aa)) enclose the START domain.

Homodimer. Interacts with TAX1BP1. In terms of tissue distribution, ubiquitously expressed. Underexpressed in hepatocellular carcinoma cells and some breast cancer cell lines.

It is found in the cytoplasm. The protein resides in the membrane. The protein localises to the mitochondrion membrane. Its subcellular location is the lipid droplet. Functionally, GTPase-activating protein for RhoA, and perhaps for Cdc42. May be involved in regulation of cytoskeletal reorganization, cell proliferation and cell motility. Acts a tumor suppressor in hepatocellular carcinoma cells. This chain is StAR-related lipid transfer protein 13 (STARD13), found in Homo sapiens (Human).